A 465-amino-acid polypeptide reads, in one-letter code: Glutathione reductase (465 aa).

Positions 16 and 17 each coordinate FAD. Ser-16 contacts glutathione. Position 23 (Arg-23) interacts with glutathione. Residues Glu-42, Thr-49, Cys-50, and Lys-58 each contribute to the FAD site. Cys-50 and Cys-55 are joined by a disulfide. Position 108 (Tyr-108) interacts with glutathione. An FAD-binding site is contributed by Gly-124. NADP(+) contacts are provided by Ala-187, Ile-190, Glu-193, Arg-210, Arg-216, and Gly-276. FAD is bound at residue Asp-318. Leu-324 contributes to the NADP(+) binding site. Thr-326 is a binding site for FAD. Position 334 (Arg-334) interacts with glutathione. NADP(+) is bound at residue Val-357. Residue His-454 participates in FAD binding. His-454 (proton acceptor) is an active-site residue.

It belongs to the class-I pyridine nucleotide-disulfide oxidoreductase family. It depends on FAD as a cofactor.

The protein localises to the cytoplasm. The catalysed reaction is 2 glutathione + NADP(+) = glutathione disulfide + NADPH + H(+). Its function is as follows. Catalyzes the reduction of glutathione disulfide (GSSG) to reduced glutathione (GSH). Constitutes the major mechanism to maintain a high GSH:GSSG ratio in the cytosol. The amount of GSH may affect the determination of cell fate. The chain is Glutathione reductase (gsr) from Dictyostelium discoideum (Social amoeba).